Reading from the N-terminus, the 1905-residue chain is Tudor domain-containing 6-like (1905 aa).

3 Tudor domains span residues 1-30 (MVEV…LREM), 215-279 (YERG…LFDL), and 435-491 (SVTP…AYEL). A disordered region spans residues 564–795 (SRAEGSFGNS…SKLTPPLSKL (232 aa)). The segment covering 573 to 591 (SEKRNQLNDLDRGGRKETT) has biased composition (basic and acidic residues). Polar residues predominate over residues 592–602 (SKFQPYSQGSK). Residues 622–631 (FQTKEREQFE) are compositionally biased toward basic and acidic residues. Composition is skewed to polar residues over residues 651 to 660 (VQKNMSQSGF) and 687 to 704 (LYSQ…SSYS). Basic and acidic residues predominate over residues 715-726 (RSKERQVSEHKQ). Composition is skewed to polar residues over residues 746–766 (KASQ…GSDQ) and 774–787 (NASQ…QESK). Tudor domains are found at residues 853 to 910 (YVNL…LLSI) and 1060 to 1118 (EIEV…IAAI). Disordered stretches follow at residues 1213–1245 (IEDN…TPAV), 1449–1599 (EDFE…TETE), 1655–1682 (VEDL…SGPV), and 1827–1905 (ESPA…APSV). Acidic residues-rich tracts occupy residues 1491 to 1500 (EAEGLEDQDQ) and 1522 to 1535 (EQAE…DPGT). Positions 1553-1588 (SQEHKDFPEQEEDRVAEHKNDISEPDLQSKEQKEDL) are enriched in basic and acidic residues. Residues 1663–1673 (QESQICISGSD) show a composition bias toward polar residues. Residues 1876–1887 (FEPETDDMEQME) show a composition bias toward acidic residues.

As to quaternary structure, interacts with FRGY2 (a component of messenger ribonucleoprotein (mRNP) particle) during germ cell development. Expressed in testis.

The protein localises to the cytoplasm. Functionally, tudor domain-containing protein involved in germ cell development, more specifically the formation of chromatoid body (during spermiogenesis), Balbiani body (during oogenesis), germ plasm (upon fertilization), and for proper miRNA expression and spliceosome maturation. Component of cytoplasmic mRNP particle through interaction with FRGY2, and binds to maternal mRNA related to cell cycle (RCC1, RHAMM, INCENP-A, MAD2L1, HELLS) and a germ plasm specific mRNA (Dead end/Dnd1), it is proposed a role in translational activation of the maternal mRNAs repressed in mRNP particle. This chain is Tudor domain-containing 6-like, found in Xenopus laevis (African clawed frog).